A 307-amino-acid polypeptide reads, in one-letter code: Retron Ec86 putative ribosyltransferase/DNA-binding protein (307 aa).

In terms of biological role, possible ribosyltransferase/DNA-binding component of antiviral defense system retron Ec86, composed of a non-coding RNA (ncRNA), a ribosyltransferase/DNA-binding protein and a reverse transcriptase (RT). Expression of the 3-gene retron confers protection against bacteriophages T5. At multiplicity of infection (MOI) of 0.02 cultures grow normally when infected with T5 without collapsing, at MOI 2 cultures enter growth stasis. The polypeptide is Retron Ec86 putative ribosyltransferase/DNA-binding protein (Escherichia coli).